A 611-amino-acid chain; its full sequence is BTB/POZ domain-containing protein 9 (611 aa).

A BTB domain is found at 36 to 104; sequence GDVTFVVEKK…IYTGRATLTD (69 aa). Residues 142 to 240 form the BACK domain; it reads VCMTFDVASL…SLTELLNVVR (99 aa). The segment at 560–611 is disordered; the sequence is QSAQKDSSDEPGTGGASAAGQQLDPHALQAPSGSSLPSSPGSNSRSPNRQHQ. The span at 586-611 shows a compositional bias: low complexity; the sequence is ALQAPSGSSLPSSPGSNSRSPNRQHQ.

The chain is BTB/POZ domain-containing protein 9 (BTBD9) from Bos taurus (Bovine).